Here is a 578-residue protein sequence, read N- to C-terminus: Proline--tRNA ligase (578 aa).

Belongs to the class-II aminoacyl-tRNA synthetase family. ProS type 1 subfamily. As to quaternary structure, homodimer.

Its subcellular location is the cytoplasm. It catalyses the reaction tRNA(Pro) + L-proline + ATP = L-prolyl-tRNA(Pro) + AMP + diphosphate. Functionally, catalyzes the attachment of proline to tRNA(Pro) in a two-step reaction: proline is first activated by ATP to form Pro-AMP and then transferred to the acceptor end of tRNA(Pro). As ProRS can inadvertently accommodate and process non-cognate amino acids such as alanine and cysteine, to avoid such errors it has two additional distinct editing activities against alanine. One activity is designated as 'pretransfer' editing and involves the tRNA(Pro)-independent hydrolysis of activated Ala-AMP. The other activity is designated 'posttransfer' editing and involves deacylation of mischarged Ala-tRNA(Pro). The misacylated Cys-tRNA(Pro) is not edited by ProRS. The sequence is that of Proline--tRNA ligase from Burkholderia multivorans (strain ATCC 17616 / 249).